The following is a 1157-amino-acid chain: uncharacterized protein (1157 aa).

Positions 1 to 18 are cleaved as a signal peptide; it reads MNRNIFITLLISLLALSG. The N-palmitoyl cysteine moiety is linked to residue Cys19. Residue Cys19 is the site of S-diacylglycerol cysteine attachment. Transmembrane regions (helical) follow at residues 292–312, 394–414, 423–443, and 458–478; these read LSVS…FLIG, LGFI…LLIF, ALIT…FMLF, and ISYA…GMII. The interval 1134–1157 is disordered; sequence QYQKPVENSGRKLRKLEDHLRNMK. The span at 1148 to 1157 shows a compositional bias: basic and acidic residues; that stretch reads KLEDHLRNMK.

The protein belongs to the TrbL/VirB6 family.

It localises to the cell membrane. This is an uncharacterized protein from Rickettsia bellii (strain RML369-C).